Consider the following 315-residue polypeptide: Methionyl-tRNA formyltransferase (315 aa).

113–116 (SLLP) serves as a coordination point for (6S)-5,6,7,8-tetrahydrofolate.

The protein belongs to the Fmt family.

It catalyses the reaction L-methionyl-tRNA(fMet) + (6R)-10-formyltetrahydrofolate = N-formyl-L-methionyl-tRNA(fMet) + (6S)-5,6,7,8-tetrahydrofolate + H(+). Functionally, attaches a formyl group to the free amino group of methionyl-tRNA(fMet). The formyl group appears to play a dual role in the initiator identity of N-formylmethionyl-tRNA by promoting its recognition by IF2 and preventing the misappropriation of this tRNA by the elongation apparatus. The polypeptide is Methionyl-tRNA formyltransferase (Escherichia coli O6:K15:H31 (strain 536 / UPEC)).